Consider the following 72-residue polypeptide: Alpha-elapitoxin-Djk2a (72 aa).

Cystine bridges form between Cys3–Cys21, Cys14–Cys42, Cys27–Cys31, Cys46–Cys57, and Cys58–Cys63.

Belongs to the three-finger toxin family. Long-chain subfamily. Type II alpha-neurotoxin sub-subfamily. As to expression, expressed by the venom gland.

It is found in the secreted. In terms of biological role, binds with high affinity to muscular (alpha-1/CHRNA1) and neuronal (alpha-7/CHRNA7) nicotinic acetylcholine receptor (nAChR) and inhibits acetylcholine from binding to the receptor, thereby impairing neuromuscular and neuronal transmission. The protein is Alpha-elapitoxin-Djk2a of Dendroaspis jamesoni kaimosae (Eastern Jameson's mamba).